Here is a 742-residue protein sequence, read N- to C-terminus: Alginate lyase (742 aa).

The N-terminal stretch at 1 to 26 is a signal peptide; it reads MRLQPLFVSLALAAPCALLPTASLSA. Substrate-binding positions include Arg143, 153-156, Gln204, His208, and 263-266; these read QVLN and YYQR. Catalysis depends on Tyr264, which acts as the Proton donor. His418 functions as the Proton acceptor in the catalytic mechanism. His420 and Asp438 together coordinate Zn(2+). Arg443 provides a ligand contact to substrate. His469 contacts Zn(2+). A substrate-binding site is contributed by Glu669.

This sequence belongs to the polysaccharide lyase 17 family. As to quaternary structure, homodimer. The cofactor is Zn(2+).

The protein resides in the periplasm. The catalysed reaction is Cleavage of 4-deoxy-alpha-L-erythro-hex-4-enopyranuronoside oligosaccharides into 4-deoxy-alpha-L-erythro-hex-4-enopyranuronate monosaccharides.. Its function is as follows. Polysaccharide lyase that catalyzes the depolymerization of alginate via a beta-elimination mechanism, cleaving the beta-1,4 glycosidic bond between two adjacent sugar residues. Acts specifically on alginate and each of its block structures, with highest activity toward poly-beta-D-mannuronate (poly-ManA). Shows an exolytic mode of action, producing unsaturated monomers. Displays a very low activity against poly-beta-D-glucuronate (poly-GlcA), and is not active on poly-alpha-D-galacturonate, hyaluronan, heparin, heparan sulfate and chondroitin sulfate. The sequence is that of Alginate lyase from Stenotrophomonas maltophilia (strain K279a).